The primary structure comprises 220 residues: Zip homologous protein 1 (220 aa).

The segment at 6–44 (CNGCGCSPSKRQFFITACSHVFCETCRTTPTADFCHLCK) adopts an RING-type zinc-finger fold. A coiled-coil region spans residues 124–155 (LTSFEENNRKKLEDIERENEKLRNLISALELK). Disordered regions lie at residues 166 to 186 (EFFM…SDVD) and 201 to 220 (RSDS…GSLF). The span at 171-180 (GTPTSSNPSV) shows a compositional bias: polar residues.

As to quaternary structure, interacts with zhp-2; the interaction is required for their chromosome association and stability. As to expression, expressed in the germline.

Its subcellular location is the chromosome. Its function is as follows. Recruited co-dependently with zhp-2 to the synaptonemal complex between homologous chromosome pairs to regulate the formation and number of crossover events between homologs during meiotic recombination. Together with zhp-2, promotes the accumulation of pro-crossover proteins, including zhp-3 and zhp-4, at a designated crossover site along the recombination intermediate. Limits the number of crossover sites along a recombination intermediate by restricting the association of these pro-crossover proteins with other recombination sites during late prophase. Also, together with zhp-2, plays a role in chromosome remodeling following crossover formation to promote two successive rounds of chromosome segregation during meiosis. The sequence is that of Zip homologous protein 1 from Caenorhabditis elegans.